Here is an 828-residue protein sequence, read N- to C-terminus: G-type lectin S-receptor-like serine/threonine-protein kinase At2g19130 (828 aa).

The first 22 residues, 1-22, serve as a signal peptide directing secretion; the sequence is MVSFLTLTSFFFICFFIHGSSA. The Bulb-type lectin domain occupies 23–146; it reads VDTISGDFTL…GSSLSANVLW (124 aa). Residues 23–439 lie on the Extracellular side of the membrane; it reads VDTISGDFTL…GASGKSNNKG (417 aa). Residues Asn85, Asn113, Asn203, Asn234, Asn240, and Asn255 are each glycosylated (N-linked (GlcNAc...) asparagine). In terms of domain architecture, EGF-like spans 286–322; it reads PRQQCQVYRYCGSFGICSDKSEPFCRCPQGFRPMSQK. 4 cysteine pairs are disulfide-bonded: Cys290-Cys302, Cys296-Cys310, Cys372-Cys394, and Cys376-Cys382. In terms of domain architecture, PAN spans 341–422; that stretch reads CSRGDINQFF…EGNIFYLRLA (82 aa). Residues 440–460 traverse the membrane as a helical segment; sequence LIFGAVLGSLGVIVLVLLVVI. Over 461 to 828 the chain is Cytoplasmic; it reads LILRYRRRKR…KKMTNDNSSA (368 aa). The Protein kinase domain occupies 493-770; that stretch reads KNFSDKLGGG…QVVQILEGVL (278 aa). ATP-binding positions include 499 to 507 and Lys521; that span reads LGGGGFGSV. Ser527 bears the Phosphoserine mark. Residues 582–600 are caM-binding; sequence VEEKIVLGWKLRFQIALGT. The active-site Proton acceptor is Asp619. The residue at position 653 (Thr653) is a Phosphothreonine. Residues 796–828 form a disordered region; it reads ESSSSSSHNSSQNHKHSSSSSSSKKMTNDNSSA. Residues 797–828 show a composition bias toward low complexity; the sequence is SSSSSSHNSSQNHKHSSSSSSSKKMTNDNSSA. Phosphoserine is present on Ser815.

This sequence belongs to the protein kinase superfamily. Ser/Thr protein kinase family.

It is found in the cell membrane. It carries out the reaction L-seryl-[protein] + ATP = O-phospho-L-seryl-[protein] + ADP + H(+). The enzyme catalyses L-threonyl-[protein] + ATP = O-phospho-L-threonyl-[protein] + ADP + H(+). This Arabidopsis thaliana (Mouse-ear cress) protein is G-type lectin S-receptor-like serine/threonine-protein kinase At2g19130.